Reading from the N-terminus, the 275-residue chain is Formamidopyrimidine-DNA glycosylase (275 aa).

The Schiff-base intermediate with DNA role is filled by P2. Catalysis depends on E3, which acts as the Proton donor. Residue K58 is the Proton donor; for beta-elimination activity of the active site. H91, R109, and K154 together coordinate DNA. Residues 240 to 274 (AVYERAGLACRVCGTPIRRLVQGQRATYFCPHCQK) form an FPG-type zinc finger. R264 serves as the catalytic Proton donor; for delta-elimination activity.

The protein belongs to the FPG family. As to quaternary structure, monomer. It depends on Zn(2+) as a cofactor.

It catalyses the reaction Hydrolysis of DNA containing ring-opened 7-methylguanine residues, releasing 2,6-diamino-4-hydroxy-5-(N-methyl)formamidopyrimidine.. The catalysed reaction is 2'-deoxyribonucleotide-(2'-deoxyribose 5'-phosphate)-2'-deoxyribonucleotide-DNA = a 3'-end 2'-deoxyribonucleotide-(2,3-dehydro-2,3-deoxyribose 5'-phosphate)-DNA + a 5'-end 5'-phospho-2'-deoxyribonucleoside-DNA + H(+). Its function is as follows. Involved in base excision repair of DNA damaged by oxidation or by mutagenic agents. Acts as a DNA glycosylase that recognizes and removes damaged bases. Has a preference for oxidized purines, such as 7,8-dihydro-8-oxoguanine (8-oxoG). Has AP (apurinic/apyrimidinic) lyase activity and introduces nicks in the DNA strand. Cleaves the DNA backbone by beta-delta elimination to generate a single-strand break at the site of the removed base with both 3'- and 5'-phosphates. This is Formamidopyrimidine-DNA glycosylase from Bordetella avium (strain 197N).